The chain runs to 689 residues: MTSTSKLDANQLARQRKKLEKDRRKKVYDDQQVQGTNNSSIVSKRSVEKLYTQVLQPELGEWFQYFVPKGKRRSPAINRGYWIRMESIRQMVIRIIKANSPNVRINVVNLGCGFDPLAFQLLSLFKNQYNLNFIDIDYPDLVKNKYNMIQQSDEIKQLIGDQGSKSSDLYVMETDNYQLVGCDLKNLAYYKEILPKLVSRNVDPHPTSINIFIAEVSLAYMKPQFANPVIEISSQVNNSHFLILEQIMPDGATNAFATKMLYHFQHLRSPIQCVETYPTEKLQLQRFKRYYKHAEIKNLYGNWKFLIDYQMQKNISTIEEFDEWEEFIIFCQHYVIVHATHMDQLIYDDESSEEQKNEKAFSEMSLDSSVAISHDDRFNDEQLQLKFPAIASFKDKIYVNGGLKQTRNDENLEIDLQTGVITKLDQTENLPTARMCHTLTNLGENLVLIGGRSRPGVFFKDVYMFDTAKKWTRLADLPVGRSRHATVKISDHEVLIFGGLDASSSTTGDELFLLCNTNTNSYTPVKPIGDNDNHPIKNLQSACMIFDGKQGYIFGGMEDINVPIVNSKLYRFELVGENNISVTKVFDHSLLKRIGSKAHILENGDKLLIVGGVSPDQLFTKSTNIVTLDLNIFTFKSVEIPNVISEKVPPIFVGFELVQINNKASYIISGGAVCYSFGSCYNSVYKLEY.

The segment at 1–33 (MTSTSKLDANQLARQRKKLEKDRRKKVYDDQQV) is disordered. A compositionally biased stretch (basic residues) spans 14–26 (RQRKKLEKDRRKK). S-adenosyl-L-methionine-binding positions include Arg84, Gly111, Asp137, 183 to 184 (DL), and Glu215.

It belongs to the methyltransferase superfamily. LCMT family.

It carries out the reaction 7-[(3S)-3-amino-3-carboxypropyl]wyosine(37) in tRNA(Phe) + S-adenosyl-L-methionine = 7-[(3S)-(3-amino-3-methoxycarbonyl)propyl]wyosine(37) in tRNA(Phe) + S-adenosyl-L-homocysteine. The catalysed reaction is 7-[(3S)-(3-amino-3-methoxycarbonyl)propyl]wyosine(37) in tRNA(Phe) + S-adenosyl-L-methionine + CO2 = wybutosine(37) in tRNA(Phe) + S-adenosyl-L-homocysteine + 2 H(+). Its pathway is tRNA modification; wybutosine-tRNA(Phe) biosynthesis. In terms of biological role, probable S-adenosyl-L-methionine-dependent methyltransferase that acts as a component of the wybutosine biosynthesis pathway. Wybutosine is a hyper modified guanosine with a tricyclic base found at the 3'-position adjacent to the anticodon of eukaryotic phenylalanine tRNA. May methylate the carboxyl group of leucine residues to form alpha-leucine ester residues. This chain is tRNA wybutosine-synthesizing protein 4 (PPM2), found in Candida albicans (strain SC5314 / ATCC MYA-2876) (Yeast).